Consider the following 69-residue polypeptide: MKTQFVILIVAVVLLQLIANSEAFLSTLWNAAKSIFGKRGLRNLDNLDDDIFEPEMSEADLRYLQDLLR.

Positions 1–23 (MKTQFVILIVAVVLLQLIANSEA) are cleaved as a signal peptide. Phenylalanine amide is present on F36. Positions 40–69 (GLRNLDNLDDDIFEPEMSEADLRYLQDLLR) are excised as a propeptide.

This sequence belongs to the non-disulfide-bridged peptide (NDBP) superfamily. Short antimicrobial peptide (group 4) family. In terms of tissue distribution, expressed by the venom gland.

The protein resides in the secreted. It is found in the target cell membrane. Amphipathic peptide that shows antibacterial activities against both Gram-positive (MIC=10 uM, 20 uM and 20 uM against S.aureus, B.subtilis and S.agalactiae, respectively) and Gram-negative bacteria (MIC=20 uM, 10 uM, and 10 uM against E.coli, S.typhi, and P.aeruginosa, respectively). Is mildly hemolytic at its MIC range, but shows a strong cytotoxic activity at higher concentrations, reaching 84% lysis at 50 uM. The chain is Amphipathic peptide CT2 from Vaejovis mexicanus smithi (Mexican scorpion).